A 69-amino-acid chain; its full sequence is Sec-independent protein translocase protein TatA (69 aa).

Residues 1–21 (MFGLGGQELILILLIILLLFG) traverse the membrane as a helical segment.

The protein belongs to the TatA/E family. In terms of assembly, forms a complex with TatC.

Its subcellular location is the cell inner membrane. Its function is as follows. Part of the twin-arginine translocation (Tat) system that transports large folded proteins containing a characteristic twin-arginine motif in their signal peptide across membranes. TatA could form the protein-conducting channel of the Tat system. This chain is Sec-independent protein translocase protein TatA, found in Chlorobium phaeovibrioides (strain DSM 265 / 1930) (Prosthecochloris vibrioformis (strain DSM 265)).